Consider the following 85-residue polypeptide: Conotoxin Vx15a (85 aa).

A signal peptide spans 1 to 23 (MEKLTVLILVATVLLTIQVLAQS). A propeptide spanning residues 24–49 (DGDKHLMKRSKQYATKRLSALMRGHR) is cleaved from the precursor. A Pyrrolidone carboxylic acid modification is found at Gln-50.

This sequence belongs to the conotoxin O2 superfamily. Contains 4 disulfide bonds. As to expression, expressed by the venom duct.

Its subcellular location is the secreted. The sequence is that of Conotoxin Vx15a from Conus vexillum (Flag cone).